The primary structure comprises 1130 residues: Putative protein tag-278 (1130 aa).

3 disordered regions span residues 1–92 (MSRS…DIDN), 104–129 (VARE…ELKR), and 974–1130 (NELI…AWKF). Coiled coils occupy residues 121–779 (AGRE…EEIK) and 805–1061 (EERE…ARAK). Residues 983-993 (RQTDESTSEPH) are compositionally biased toward basic and acidic residues. A compositionally biased stretch (polar residues) spans 999–1011 (SITSHGVFQNFVS). Basic and acidic residues-rich tracts occupy residues 1013–1057 (MKDK…EKSP) and 1068–1081 (RLRD…KSDN). Residues 1082-1095 (LESTPSSSSRNLLS) show a composition bias toward low complexity. Basic and acidic residues predominate over residues 1116–1130 (TKKDSSSEKRPAWKF).

The sequence is that of Putative protein tag-278 (tag-278) from Caenorhabditis elegans.